We begin with the raw amino-acid sequence, 101 residues long: Urease subunit beta (101 aa).

Belongs to the urease beta subunit family. Heterotrimer of UreA (gamma), UreB (beta) and UreC (alpha) subunits. Three heterotrimers associate to form the active enzyme.

It is found in the cytoplasm. It catalyses the reaction urea + 2 H2O + H(+) = hydrogencarbonate + 2 NH4(+). The protein operates within nitrogen metabolism; urea degradation; CO(2) and NH(3) from urea (urease route): step 1/1. The polypeptide is Urease subunit beta (Burkholderia multivorans (strain ATCC 17616 / 249)).